The primary structure comprises 619 residues: Cationic amino acid transporter 3 (619 aa).

Residues 1–36 (MLWQALRRFGQKLVRRRLLELGMGETRLARCLSTLD) lie on the Cytoplasmic side of the membrane. Residues 37–57 (LVALGVGSTLGAGVYVLAGEV) traverse the membrane as a helical segment. The Extracellular portion of the chain corresponds to 58-61 (AKEK). Residues 62-82 (AGPSIVICFLVAALSSVLAGL) form a helical membrane-spanning segment. Over 83–107 (CYAEFGARVPGSGSAYLYSYVTVGE) the chain is Cytoplasmic. A helical transmembrane segment spans residues 108–128 (LWAFTTGWNLILSYVIGTASV). Residues 129–162 (ARAWSSAFDNLIGNHISQTLKGTILLNMPHVLAE) are Extracellular-facing. The helical transmembrane segment at 163 to 183 (YPDFFALALVLLLTGLLVLGA) threads the bilayer. The Cytoplasmic segment spans residues 184–191 (NESGLVTK). A helical membrane pass occupies residues 192 to 212 (VFTGMNLLVLGFVIISGFIKG). Residues 213 to 244 (ELRNWKLTKEDYCLTMSESNGTCSLDSMGSGG) are Extracellular-facing. A glycan (N-linked (GlcNAc...) asparagine) is linked at asparagine 232. A helical transmembrane segment spans residues 245–265 (FMPFGLEGILRGAATCFYAFV). Residues 266–285 (GFDCIATTGEEAQNPQRSIP) are Cytoplasmic-facing. Residues 286–306 (MGIVISLSICFLAYFGVSSAL) traverse the membrane as a helical segment. Over 307–335 (TLMMPYYKLQPESPLPEAFTYVGWEPARY) the chain is Extracellular. Residues 336-356 (LVAIGSLCALSTSLLGSMFPM) form a helical membrane-spanning segment. At 357-382 (PRVIYAMAEDGLLFRVLARVHNGTHT) the chain is on the cytoplasmic side. Residues 383–403 (PIVATVVSGVIAAFMAFLFEL) traverse the membrane as a helical segment. At 404 to 406 (TDL) the chain is on the extracellular side. The helical transmembrane segment at 407–427 (VDLMSIGTLLAYSLVSICVLI) threads the bilayer. Residues 428-475 (LRYQPDQEMKNGEEEVELQEERTLEAEKLTVQALFCQVDSIPTLLSGR) are Cytoplasmic-facing. The helical transmembrane segment at 476–496 (IVYVCSSLLAVLLTVLCLVLT) threads the bilayer. Topologically, residues 497–507 (WWTTPLHSGDP) are extracellular. Residues 508–528 (VWVTVVVLILGLILGISGVIW) traverse the membrane as a helical segment. At 529-540 (RQPQNRTPLHFK) the chain is on the cytoplasmic side. Residues 541 to 561 (VPVVPLLPLVSIFVNVYLMMQ) form a helical membrane-spanning segment. The Extracellular portion of the chain corresponds to 562-569 (MTADTWAR). A helical transmembrane segment spans residues 570–590 (FGVWMLIGFAIYFGYGIQHSV). The Cytoplasmic segment spans residues 591-619 (EEVKNHQTLPKTRPQTIDLDLTTSCVHSI). At threonine 606 the chain carries Phosphothreonine. The residue at position 618 (serine 618) is a Phosphoserine.

It belongs to the amino acid-polyamine-organocation (APC) superfamily. Cationic amino acid transporter (CAT) (TC 2.A.3.3) family. Post-translationally, N-glycosylated. As to expression, highly expressed in brain.

The protein resides in the cell membrane. It catalyses the reaction L-arginine(in) = L-arginine(out). The catalysed reaction is L-lysine(in) = L-lysine(out). It carries out the reaction L-ornithine(in) = L-ornithine(out). Its activity is regulated as follows. Inhibited by high potassium ions-induced membrane depolarization. Its function is as follows. Uniporter that mediates the uptake of cationic L-amino acids such as L-arginine, L-lysine and L-ornithine. The transport is sodium ions- and pH-independent, moderately trans-stimulated and is mediated by passive diffusion. This Rattus norvegicus (Rat) protein is Cationic amino acid transporter 3.